The primary structure comprises 156 residues: Small ribosomal subunit protein uS7 (156 aa).

Belongs to the universal ribosomal protein uS7 family. In terms of assembly, part of the 30S ribosomal subunit. Contacts proteins S9 and S11.

One of the primary rRNA binding proteins, it binds directly to 16S rRNA where it nucleates assembly of the head domain of the 30S subunit. Is located at the subunit interface close to the decoding center, probably blocks exit of the E-site tRNA. This Geotalea uraniireducens (strain Rf4) (Geobacter uraniireducens) protein is Small ribosomal subunit protein uS7.